The chain runs to 122 residues: Large ribosomal subunit protein uL14 (122 aa).

Belongs to the universal ribosomal protein uL14 family. In terms of assembly, part of the 50S ribosomal subunit. Forms a cluster with proteins L3 and L19. In the 70S ribosome, L14 and L19 interact and together make contacts with the 16S rRNA in bridges B5 and B8.

Binds to 23S rRNA. Forms part of two intersubunit bridges in the 70S ribosome. The sequence is that of Large ribosomal subunit protein uL14 from Limosilactobacillus fermentum (strain NBRC 3956 / LMG 18251) (Lactobacillus fermentum).